The primary structure comprises 181 residues: Large ribosomal subunit protein uL5 (181 aa).

The protein belongs to the universal ribosomal protein uL5 family. As to quaternary structure, part of the 50S ribosomal subunit; part of the 5S rRNA/L5/L18/L25 subcomplex. Contacts the 5S rRNA and the P site tRNA. Forms a bridge to the 30S subunit in the 70S ribosome.

Its function is as follows. This is one of the proteins that bind and probably mediate the attachment of the 5S RNA into the large ribosomal subunit, where it forms part of the central protuberance. In the 70S ribosome it contacts protein S13 of the 30S subunit (bridge B1b), connecting the 2 subunits; this bridge is implicated in subunit movement. Contacts the P site tRNA; the 5S rRNA and some of its associated proteins might help stabilize positioning of ribosome-bound tRNAs. The polypeptide is Large ribosomal subunit protein uL5 (Baumannia cicadellinicola subsp. Homalodisca coagulata).